The chain runs to 255 residues: MWIGIISLFPEMFRAITDYGVTGRAVKNGLLSIQSWSPRDFTHDRHRTVDDRPYGGGPGMLMMVQPLRDAIHAAKAAAGEGAKVIYLSPQGRKLDQAGVSELATNQKLILVCGRYEGIDERVIQTEIDEEWSIGDYVLSGGELPAMTLIDSVSRFIPGVLGHEASATEDSFAEGLLDCPHYTRPEVLEGMEVPPVLLSGNHAEIRRWRLKQSLGRTWLRRPELLENLALTEEQARLLAEFKTEHAQQQHKHDGMA.

Residues G113 and 133–138 each bind S-adenosyl-L-methionine; that span reads IGDYVL.

It belongs to the RNA methyltransferase TrmD family. In terms of assembly, homodimer.

The protein resides in the cytoplasm. The enzyme catalyses guanosine(37) in tRNA + S-adenosyl-L-methionine = N(1)-methylguanosine(37) in tRNA + S-adenosyl-L-homocysteine + H(+). In terms of biological role, specifically methylates guanosine-37 in various tRNAs. This chain is tRNA (guanine-N(1)-)-methyltransferase, found in Escherichia coli O6:K15:H31 (strain 536 / UPEC).